Consider the following 63-residue polypeptide: MAGGRVAHATLKGPSVVKEIFIGLTLGLVAGGMWKMHHWNEQRKTRSFYDMLEKGQISVVVEE.

A helical membrane pass occupies residues 16-34 (VVKEIFIGLTLGLVAGGMW).

Belongs to the cytochrome c oxidase subunit 5C family.

The protein localises to the mitochondrion inner membrane. Its function is as follows. This protein is one of the nuclear-coded polypeptide chains of cytochrome c oxidase, the terminal oxidase in mitochondrial electron transport. The sequence is that of Cytochrome c oxidase subunit 5C (COX5C) from Hordeum vulgare (Barley).